A 72-amino-acid chain; its full sequence is Gas vesicle protein A (72 aa).

The protein belongs to the gas vesicle GvpA family. As to quaternary structure, the gas vesicle shell is 2 nm thick and consists of a single layer of this protein. It forms helical ribs nearly perpendicular to the long axis of the vesicle.

The protein localises to the gas vesicle shell. In terms of biological role, gas vesicles are hollow, gas filled proteinaceous nanostructures found in some microorganisms. During planktonic growth they allow positioning of the organism at a favorable depth for light or nutrient acquisition. GvpA forms the protein shell. This is Gas vesicle protein A from Pseudanabaena galeata (strain PCC 6901).